A 437-amino-acid polypeptide reads, in one-letter code: Glycogen synthase (437 aa).

Lys15 is a binding site for ADP-alpha-D-glucose.

It belongs to the glycosyltransferase 1 family. Bacterial/plant glycogen synthase subfamily.

The catalysed reaction is [(1-&gt;4)-alpha-D-glucosyl](n) + ADP-alpha-D-glucose = [(1-&gt;4)-alpha-D-glucosyl](n+1) + ADP + H(+). Its pathway is glycan biosynthesis; glycogen biosynthesis. In terms of biological role, synthesizes alpha-1,4-glucan chains using ADP-glucose. In Thermus thermophilus (strain ATCC BAA-163 / DSM 7039 / HB27), this protein is Glycogen synthase.